A 348-amino-acid chain; its full sequence is Flagellar P-ring protein (348 aa).

The N-terminal stretch at 1–24 (MRRKNNNKIWIWVATLILSISALY) is a signal peptide.

Belongs to the FlgI family. As to quaternary structure, the basal body constitutes a major portion of the flagellar organelle and consists of four rings (L,P,S, and M) mounted on a central rod.

It localises to the periplasm. It is found in the bacterial flagellum basal body. Functionally, assembles around the rod to form the L-ring and probably protects the motor/basal body from shearing forces during rotation. The polypeptide is Flagellar P-ring protein (Helicobacter hepaticus (strain ATCC 51449 / 3B1)).